A 270-amino-acid chain; its full sequence is MNFNYFILVLFFITSGHAKSETREVHQEAENHIKRGSNTGFNFKTLDKEKRSAEEQNLAEHLVTRGSNKGFNFMVDMINALSNGKRSAEEQDLAEDLVTRGSNKGFNFMVDMIQALSKGKRSAEDQDLAEDLVTRGSNKGFNFMVDMIQALSNGKRSAEEQDLAEHLVTRGSNKGFNFMVDMINALSNGKRSAEEQDLVEDLVTRRSNKGFNFMVDMIQALSKGKRSAEEQDLAEDLVTRGSNKGFNFMVDMIQALSKGKRSAEQEKDMK.

The first 18 residues, 1–18, serve as a signal peptide directing secretion; the sequence is MNFNYFILVLFFITSGHA. Propeptides lie at residues 19-35 and 52-65; these read KSETREVHQEAENHIKR and SAEEQNLAEHLVTR. N83 bears the Asparagine amide mark. A propeptide spanning residues 87 to 100 is cleaved from the precursor; sequence SAEEQDLAEDLVTR. The residue at position 118 (K118) is a Lysine amide. Positions 122 to 135 are excised as a propeptide; sequence SAEDQDLAEDLVTR. N153 is subject to Asparagine amide. A propeptide spanning residues 157–170 is cleaved from the precursor; that stretch reads SAEEQDLAEHLVTR. N188 is subject to Asparagine amide. Residues 192-205 constitute a propeptide that is removed on maturation; it reads SAEEQDLVEDLVTR. The residue at position 223 (K223) is a Lysine amide. Positions 227 to 240 are excised as a propeptide; sequence SAEEQDLAEDLVTR. K258 carries the lysine amide modification. The propeptide occupies 262 to 270; it reads SAEQEKDMK.

This sequence belongs to the maximin-S family. In terms of tissue distribution, expressed by the skin dorsal glands.

It is found in the secreted. Its function is as follows. Maximin-S1 has no antimicrobial activity. Has no hemolytic activity. In terms of biological role, maximin-S2 has an activity against mycoplasma but has no activity against common Gram-positive and Gram-negative bacteria nor fungi. Has no hemolytic activity. Maximin-S3 has an activity against mycoplasma but has no activity against common Gram-positive and Gram-negative bacteria nor fungi. Has no hemolytic activity. Functionally, maximin-S4 has an activity against mycoplasma but has no activity against common Gram-positive and Gram-negative bacteria nor fungi. Has no hemolytic activity. Its function is as follows. Maximin-S5 has an activity against mycoplasma but has no activity against common Gram-positive and Gram-negative bacteria nor fungi. Has no hemolytic activity. In Bombina maxima (Giant fire-bellied toad), this protein is Maximins-S type D.